The sequence spans 165 residues: Protein-export protein SecB (165 aa).

The protein belongs to the SecB family. As to quaternary structure, homotetramer, a dimer of dimers. One homotetramer interacts with 1 SecA dimer.

Its subcellular location is the cytoplasm. One of the proteins required for the normal export of preproteins out of the cell cytoplasm. It is a molecular chaperone that binds to a subset of precursor proteins, maintaining them in a translocation-competent state. It also specifically binds to its receptor SecA. The sequence is that of Protein-export protein SecB from Colwellia psychrerythraea (strain 34H / ATCC BAA-681) (Vibrio psychroerythus).